We begin with the raw amino-acid sequence, 378 residues long: Alanine dehydrogenase (378 aa).

Positions 15 and 74 each coordinate substrate. His95 (proton donor/acceptor) is an active-site residue. NAD(+)-binding positions include Ser132, 176-177, Asp196, Ser218, 237-238, 265-268, and 297-300; these read VV, VL, VAID, and VANM. Asp268 acts as the Proton donor/acceptor in catalysis.

Belongs to the AlaDH/PNT family. Homohexamer. Trimer of dimer.

The protein localises to the cytoplasm. The catalysed reaction is L-alanine + NAD(+) + H2O = pyruvate + NH4(+) + NADH + H(+). The protein operates within amino-acid degradation; L-alanine degradation via dehydrogenase pathway; NH(3) and pyruvate from L-alanine: step 1/1. Functionally, catalyzes the reversible oxidative deamination of L-alanine to pyruvate. Oxidative deamination proceeds through a sequential, ordered ternary-binary mechanism, where NAD(+) binds first followed by L-alanine; the products are released in the order ammonia, pyruvate and NADH. Disruption blocks sporulation probably in stage V; 20-30% sporulation can be restored if the media is supplemented with pyruvate, suggesting lack of pyruvate blocks sporulation. Thus it is a key factor in the assimilation of L-alanine as an energy source via the tricarboxylic acid cycle during sporulation. The sequence is that of Alanine dehydrogenase from Bacillus subtilis (strain 168).